Reading from the N-terminus, the 291-residue chain is Protein US2 (291 aa).

Glycine 2 carries the N-acetylglycine; by host modification. Residues asparagine 223–serine 281 form a disordered region.

The protein belongs to the herpesviridae HHV-1 US2 protein family. As to quaternary structure, interacts with host KRT18. Interacts with host MAP3K7; this interaction induces host NF-kappa-B pathway.

It localises to the virion. The protein localises to the host cytoplasm. Its subcellular location is the host cell surface. It is found in the host nucleus. Its function is as follows. Plays a role in the activation of the host NF-kappa-B pathway by interacting with and thus activating the component MAP3K7. In Human herpesvirus 2 (strain HG52) (HHV-2), this protein is Protein US2.